The following is a 637-amino-acid chain: Sterol 3-beta-glucosyltransferase UGT80A2 (637 aa).

Disordered regions lie at residues Met1 to Val29 and Val66 to Gln112. Residues Ser13 to Ser24 show a composition bias toward low complexity. The span at Ala67–Arg79 shows a compositional bias: polar residues. Residues Arg103–Gln112 show a composition bias toward basic and acidic residues.

This sequence belongs to the glycosyltransferase 28 family. As to expression, expressed in roots, cauline leaf epidermal cells, stomata, stamen, pollen and around the base of siliques.

It carries out the reaction a sterol + UDP-alpha-D-glucose = a sterol 3-beta-D-glucoside + UDP + H(+). In terms of biological role, involved in the biosynthesis of sterol glucosides. Catalyzes the synthesis of steryl glycosides (SGs) and acyl steryl glycosides (ASGs) which are the most abundant sterol derivatives in higher plants. Can act on several sterols like sitosterol, campesterol and stigmasterol. Both UGT80A2 and UGT80B1 are required for the normal production of SGs and ASGs in seeds. This is Sterol 3-beta-glucosyltransferase UGT80A2 (UGT80A2) from Arabidopsis thaliana (Mouse-ear cress).